The following is a 613-amino-acid chain: UvrABC system protein C (613 aa).

A GIY-YIG domain is found at 12–89 (DHPGVYIMHD…IKQHRPRYNV (78 aa)). The 36-residue stretch at 199–234 (TALVKELKEQMEAAAARLEFEKAARLRDQLRAVQEV) folds into the UVR domain.

It belongs to the UvrC family. As to quaternary structure, interacts with UvrB in an incision complex.

The protein localises to the cytoplasm. Its function is as follows. The UvrABC repair system catalyzes the recognition and processing of DNA lesions. UvrC both incises the 5' and 3' sides of the lesion. The N-terminal half is responsible for the 3' incision and the C-terminal half is responsible for the 5' incision. This is UvrABC system protein C from Moorella thermoacetica (strain ATCC 39073 / JCM 9320).